The sequence spans 1383 residues: DNA-directed RNA polymerase subunit beta (1383 aa).

Belongs to the RNA polymerase beta chain family. The RNAP catalytic core consists of 2 alpha, 1 beta, 1 beta' and 1 omega subunit. When a sigma factor is associated with the core the holoenzyme is formed, which can initiate transcription.

The enzyme catalyses RNA(n) + a ribonucleoside 5'-triphosphate = RNA(n+1) + diphosphate. Functionally, DNA-dependent RNA polymerase catalyzes the transcription of DNA into RNA using the four ribonucleoside triphosphates as substrates. The polypeptide is DNA-directed RNA polymerase subunit beta (Bartonella quintana (strain Toulouse) (Rochalimaea quintana)).